Reading from the N-terminus, the 225-residue chain is Uracil-DNA glycosylase (225 aa).

The active-site Proton acceptor is Asp65.

It belongs to the uracil-DNA glycosylase (UDG) superfamily. UNG family.

It is found in the cytoplasm. The enzyme catalyses Hydrolyzes single-stranded DNA or mismatched double-stranded DNA and polynucleotides, releasing free uracil.. Its function is as follows. Excises uracil residues from the DNA which can arise as a result of misincorporation of dUMP residues by DNA polymerase or due to deamination of cytosine. In Bacillus cereus (strain AH820), this protein is Uracil-DNA glycosylase.